The chain runs to 382 residues: Cytochrome c biogenesis CcmF N-terminal-like mitochondrial protein 1 (382 aa).

Helical transmembrane passes span 1–21, 30–50, 79–99, and 117–137; these read MSIS…FVAF, AFGA…LLFC, HEGS…FFCY, and SLFF…LLRY.

Belongs to the CcmF/CycK/Ccl1/NrfE/CcsA family. As to quaternary structure, interacts with CCMFN2 and CCMH.

The protein localises to the mitochondrion inner membrane. Forms a complex with CCMFC, CCMFN2 and CCMH that performs the assembly of heme with c-type apocytochromes in mitochondria. The chain is Cytochrome c biogenesis CcmF N-terminal-like mitochondrial protein 1 from Arabidopsis thaliana (Mouse-ear cress).